The sequence spans 160 residues: Seed allergenic protein RA5 (160 aa).

Residues Met1–Ala26 form the signal peptide. Cystine bridges form between Cys42/Cys92, Cys56/Cys80, Cys64/Cys124, Cys81/Cys140, and Cys94/Cys152.

The protein belongs to the protease inhibitor I6 (cereal trypsin/alpha-amylase inhibitor) family. Post-translationally, five disulfide bonds are present.

It is found in the secreted. Its function is as follows. Seed storage protein. This chain is Seed allergenic protein RA5 (RA5), found in Oryza sativa subsp. japonica (Rice).